A 313-amino-acid chain; its full sequence is Olfactory receptor 2B6 (313 aa).

At 1 to 25 (MNWVNDSIIQEFILLGFSDRPWLEF) the chain is on the extracellular side. Asn5 carries an N-linked (GlcNAc...) asparagine glycan. A helical transmembrane segment spans residues 26–49 (PLLVVFLISYTVTIFGNLTIILVS). Residues 50–57 (RLDTKLHT) are Cytoplasmic-facing. Residues 58–79 (PMYFFLTNLSLLDLCYTTCTVP) traverse the membrane as a helical segment. At 80–100 (QMLVNLCSIRKVISYRGCVAQ) the chain is on the extracellular side. A disulfide bridge links Cys97 with Cys189. A helical membrane pass occupies residues 101–120 (LFIFLALGATEYLLLAVMSF). Residues 121–139 (DRFVAICRPLHYSVIMHQR) are Cytoplasmic-facing. The chain crosses the membrane as a helical span at residues 140 to 158 (LCLQLAAASWVTGFSNSVW). The Extracellular portion of the chain corresponds to 159–195 (LSTLTLQLPLCDPYVIDHFLCEVPALLKLSCVETTAN). A helical membrane pass occupies residues 196–219 (EAELFLVSELFHLIPLTLILISYA). Residues 220-236 (FIVRAVLRIQSAEGRQK) lie on the Cytoplasmic side of the membrane. A helical membrane pass occupies residues 237–259 (AFGTCGSHLIVVSLFYSTAVSVY). The Extracellular segment spans residues 260–272 (LQPPSPSSKDQGK). A helical membrane pass occupies residues 273–292 (MVSLFYGIIAPMLNPLIYTL). Topologically, residues 293–313 (RNKEVKEGFKRLVARVFLIKK) are cytoplasmic.

Belongs to the G-protein coupled receptor 1 family.

The protein resides in the cell membrane. In terms of biological role, odorant receptor. The sequence is that of Olfactory receptor 2B6 from Homo sapiens (Human).